Consider the following 540-residue polypeptide: Sensory neuron membrane protein 1 (540 aa).

Topologically, residues 1–105 (MRTDDPVIGN…WIFRPDLSKP (105 aa)) are cytoplasmic. Residues 106 to 126 (LTGDEMITIPHPLILGALLMV) form a helical membrane-spanning segment. Residues 127–436 (QRDREAMMPL…YTLFLGLRFN (310 aa)) are Extracellular-facing. 2 N-linked (GlcNAc...) asparagine glycosylation sites follow: asparagine 193 and asparagine 206. Intrachain disulfides connect cysteine 245/cysteine 310, cysteine 274/cysteine 330, and cysteine 312/cysteine 319. N-linked (GlcNAc...) asparagine glycosylation occurs at asparagine 418. Residues 437–457 (TAVKWLTIIIGTIGTIVGGFM) traverse the membrane as a helical segment. The Cytoplasmic segment spans residues 458-540 (HYKRTTKMVN…VTVTEMQERY (83 aa)).

Belongs to the CD36 family.

Its subcellular location is the cell membrane. Its function is as follows. Plays an olfactory role that is not restricted to pheromone sensitivity. The chain is Sensory neuron membrane protein 1 from Aedes aegypti (Yellowfever mosquito).